We begin with the raw amino-acid sequence, 177 residues long: Peptide deformylase 2 (177 aa).

Fe cation contacts are provided by cysteine 99 and histidine 141. The active site involves glutamate 142. Histidine 145 contacts Fe cation.

It belongs to the polypeptide deformylase family. Requires Fe(2+) as cofactor.

It carries out the reaction N-terminal N-formyl-L-methionyl-[peptide] + H2O = N-terminal L-methionyl-[peptide] + formate. In terms of biological role, removes the formyl group from the N-terminal Met of newly synthesized proteins. Requires at least a dipeptide for an efficient rate of reaction. N-terminal L-methionine is a prerequisite for activity but the enzyme has broad specificity at other positions. The chain is Peptide deformylase 2 from Ralstonia nicotianae (strain ATCC BAA-1114 / GMI1000) (Ralstonia solanacearum).